A 52-amino-acid polypeptide reads, in one-letter code: Metallothionein-2 (52 aa).

2 repeats span residues 43–47 and 48–52; these read QTCKC.

This sequence belongs to the metallothionein superfamily. Type 10 family.

In terms of biological role, the metallothioneins are involved in the cellular sequestration of toxic metal ions. This chain is Metallothionein-2 (MT-II), found in Candida glabrata (strain ATCC 2001 / BCRC 20586 / JCM 3761 / NBRC 0622 / NRRL Y-65 / CBS 138) (Yeast).